A 355-amino-acid chain; its full sequence is Undecaprenyl-phosphate alpha-N-acetylglucosaminyl 1-phosphate transferase (355 aa).

A run of 8 helical transmembrane segments spans residues 1-21 (MLSI…MRPL), 39-59 (GTIP…YYLM), 63-83 (QLRL…IGIL), 123-143 (FQLT…IAII), 182-202 (WSFA…GIPF), 208-228 (VFMG…ILLL), 237-257 (MNPV…VAII), and 315-335 (WAMF…ITHA).

It belongs to the glycosyltransferase 4 family. WecA subfamily. Requires Mg(2+) as cofactor. The cofactor is Mn(2+).

Its subcellular location is the cell inner membrane. It catalyses the reaction di-trans,octa-cis-undecaprenyl phosphate + UDP-N-acetyl-alpha-D-glucosamine = N-acetyl-alpha-D-glucosaminyl-di-trans,octa-cis-undecaprenyl diphosphate + UMP. The protein operates within bacterial outer membrane biogenesis; LPS O-antigen biosynthesis. In terms of biological role, catalyzes the transfer of the GlcNAc-1-phosphate moiety from UDP-GlcNAc onto the carrier lipid undecaprenyl phosphate (C55-P), yielding GlcNAc-pyrophosphoryl-undecaprenyl (GlcNAc-PP-C55). The chain is Undecaprenyl-phosphate alpha-N-acetylglucosaminyl 1-phosphate transferase from Haemophilus influenzae (strain ATCC 51907 / DSM 11121 / KW20 / Rd).